We begin with the raw amino-acid sequence, 424 residues long: Glutamyl-tRNA reductase (424 aa).

Substrate is bound by residues 50-53, serine 98, 103-105, and glutamine 109; these read TCNR and EDQ. Cysteine 51 acts as the Nucleophile in catalysis. NADP(+) is bound at residue 178–183; sequence GSGEMG.

The protein belongs to the glutamyl-tRNA reductase family. As to quaternary structure, homodimer.

The enzyme catalyses (S)-4-amino-5-oxopentanoate + tRNA(Glu) + NADP(+) = L-glutamyl-tRNA(Glu) + NADPH + H(+). It functions in the pathway porphyrin-containing compound metabolism; protoporphyrin-IX biosynthesis; 5-aminolevulinate from L-glutamyl-tRNA(Glu): step 1/2. Its function is as follows. Catalyzes the NADPH-dependent reduction of glutamyl-tRNA(Glu) to glutamate 1-semialdehyde (GSA). In Methanoregula boonei (strain DSM 21154 / JCM 14090 / 6A8), this protein is Glutamyl-tRNA reductase.